A 624-amino-acid polypeptide reads, in one-letter code: Chaperone protein HtpG (624 aa).

The interval 1-336 is a; substrate-binding; the sequence is MKGQETRGFQ…SSDLPLNVSR (336 aa). Residues 337–552 are b; sequence EILQDSTVTR…ADEMSTQMAK (216 aa). Positions 553-624 are c; the sequence is LFAAAGQKVP…IRRMNQLLVS (72 aa).

The protein belongs to the heat shock protein 90 family. Homodimer.

It is found in the cytoplasm. In terms of biological role, molecular chaperone. Has ATPase activity. The sequence is that of Chaperone protein HtpG from Escherichia coli O139:H28 (strain E24377A / ETEC).